The chain runs to 317 residues: MWLYLLALVGLWNLLRLFRERKVVSHLQDKYVFITGCDSGFGNLLARQLDRRGMRVLAACLTEKGAEQLRSKTSDRLETVILDVTKTESIVAATQWVKERVGNRGLWGLVNNAGISVPMGPNEWMRKKDFASVLDVNLLGVIEVTLNMLPLVRKARGRVVNIASTMGRMSLLGGGYCISKYGVEAFSDSLRRELTYFGVKVAIIEPGGFKTNVTNMERLSDNLKKLWDQATEEVKEIYGEKFRDSYMKAMESLVNMCSGDLSLVTDCMEHALTSCHPRTRYSAGWDAKFFYLPMSYLPTFLSDAVIYWGSVKPARAL.

33 to 57 contacts NADP(+); it reads FITGCDSGFGNLLARQLDRRGMRVL. Ser164 is a substrate binding site. The active-site Proton acceptor is Tyr176.

Belongs to the short-chain dehydrogenases/reductases (SDR) family.

It is found in the microsome. The protein localises to the endoplasmic reticulum. The catalysed reaction is all-trans-retinol--[retinol-binding protein] + NAD(+) = all-trans-retinal--[retinol-binding protein] + NADH + H(+). It participates in cofactor metabolism; retinol metabolism. Acts on retinol bound on cellular retinol-binding protein (CRBP). This Rattus norvegicus (Rat) protein is Retinol dehydrogenase 7.